Reading from the N-terminus, the 404-residue chain is Cysteine desulfurase IscS (404 aa).

Pyridoxal 5'-phosphate-binding positions include 75–76, Asn-155, Gln-183, and 203–205; these read AT and SGH. Lys-206 carries the post-translational modification N6-(pyridoxal phosphate)lysine. Pyridoxal 5'-phosphate is bound at residue Thr-243. The active-site Cysteine persulfide intermediate is Cys-328. Residue Cys-328 coordinates [2Fe-2S] cluster.

This sequence belongs to the class-V pyridoxal-phosphate-dependent aminotransferase family. NifS/IscS subfamily. In terms of assembly, homodimer. Forms a heterotetramer with IscU, interacts with other sulfur acceptors. Requires pyridoxal 5'-phosphate as cofactor.

It localises to the cytoplasm. It catalyses the reaction (sulfur carrier)-H + L-cysteine = (sulfur carrier)-SH + L-alanine. The protein operates within cofactor biosynthesis; iron-sulfur cluster biosynthesis. Master enzyme that delivers sulfur to a number of partners involved in Fe-S cluster assembly, tRNA modification or cofactor biosynthesis. Catalyzes the removal of elemental sulfur atoms from cysteine to produce alanine. Functions as a sulfur delivery protein for Fe-S cluster synthesis onto IscU, an Fe-S scaffold assembly protein, as well as other S acceptor proteins. The sequence is that of Cysteine desulfurase IscS from Klebsiella pneumoniae (strain 342).